We begin with the raw amino-acid sequence, 1120 residues long: Transcription-repair-coupling factor (1120 aa).

The 166-residue stretch at 591 to 756 (DLTNGMLMDR…MTGLKELSII (166 aa)) folds into the Helicase ATP-binding domain. 604–611 (GDVGFGKT) is a binding site for ATP. The DEEQ box motif lies at 709–712 (DEEQ). The 157-residue stretch at 777–933 (IIRDALLREH…TIASHDADLR (157 aa)) folds into the Helicase C-terminal domain.

The protein in the N-terminal section; belongs to the UvrB family. This sequence in the C-terminal section; belongs to the helicase family. RecG subfamily.

It is found in the cytoplasm. Its function is as follows. Couples transcription and DNA repair by recognizing RNA polymerase (RNAP) stalled at DNA lesions. Mediates ATP-dependent release of RNAP and its truncated transcript from the DNA, and recruitment of nucleotide excision repair machinery to the damaged site. The polypeptide is Transcription-repair-coupling factor (Rickettsia prowazekii (strain Madrid E)).